A 428-amino-acid polypeptide reads, in one-letter code: Gamma-glutamyl phosphate reductase (428 aa).

This sequence belongs to the gamma-glutamyl phosphate reductase family.

It localises to the cytoplasm. It catalyses the reaction L-glutamate 5-semialdehyde + phosphate + NADP(+) = L-glutamyl 5-phosphate + NADPH + H(+). It participates in amino-acid biosynthesis; L-proline biosynthesis; L-glutamate 5-semialdehyde from L-glutamate: step 2/2. In terms of biological role, catalyzes the NADPH-dependent reduction of L-glutamate 5-phosphate into L-glutamate 5-semialdehyde and phosphate. The product spontaneously undergoes cyclization to form 1-pyrroline-5-carboxylate. The polypeptide is Gamma-glutamyl phosphate reductase (Picosynechococcus sp. (strain ATCC 27264 / PCC 7002 / PR-6) (Agmenellum quadruplicatum)).